Here is a 230-residue protein sequence, read N- to C-terminus: Ribosomal RNA small subunit methyltransferase G (230 aa).

S-adenosyl-L-methionine is bound by residues Gly80, Phe85, 131 to 132, and Arg145; that span reads VE.

This sequence belongs to the methyltransferase superfamily. RNA methyltransferase RsmG family.

Its subcellular location is the cytoplasm. The catalysed reaction is guanosine(527) in 16S rRNA + S-adenosyl-L-methionine = N(7)-methylguanosine(527) in 16S rRNA + S-adenosyl-L-homocysteine. Functionally, specifically methylates the N7 position of guanine in position 527 of 16S rRNA. This is Ribosomal RNA small subunit methyltransferase G from Novosphingobium aromaticivorans (strain ATCC 700278 / DSM 12444 / CCUG 56034 / CIP 105152 / NBRC 16084 / F199).